We begin with the raw amino-acid sequence, 302 residues long: Mitochondrial glycine transporter (302 aa).

Solcar repeat units follow at residues 22–112 (HPVF…LKHH), 119–203 (PKPL…AKKL), and 213–297 (FSPV…MMEK). The next 6 helical transmembrane spans lie at 28-53 (FVCGSLSGTCSTLLFQPLDLVKTRIQ), 87-113 (GVSPSFLRCIPGVGLYFSTLYTLKHHF), 125-150 (VMLGAGSRTVAAVCMLPFTVVKTRYE), 178-201 (GLTATLMRDAPFSGIYLMFYTRAK), 217-243 (LNFSCGIVAGILASVATQPADVIKTHM), and 272-290 (GGVPRALRRTLMAAMAWTV).

This sequence belongs to the mitochondrial carrier (TC 2.A.29) family. SLC25A38 subfamily.

It is found in the mitochondrion inner membrane. It carries out the reaction glycine(in) = glycine(out). Mitochondrial glycine transporter that imports glycine into the mitochondrial matrix. Plays an important role in providing glycine for the first enzymatic step in heme biosynthesis, the condensation of glycine with succinyl-CoA to produce 5-aminolevulinate (ALA) in the mitochondrial matrix. Required during erythropoiesis. Its function is as follows. May play a role as pro-apoptotic protein that induces caspase-dependent apoptosis. The protein is Mitochondrial glycine transporter of Xenopus laevis (African clawed frog).